The sequence spans 205 residues: Holliday junction branch migration complex subunit RuvA (205 aa).

Positions M1–N64 are domain I. The segment at D65–P142 is domain II. The tract at residues V143–S156 is flexible linker. The tract at residues R157 to L205 is domain III.

The protein belongs to the RuvA family. As to quaternary structure, homotetramer. Forms an RuvA(8)-RuvB(12)-Holliday junction (HJ) complex. HJ DNA is sandwiched between 2 RuvA tetramers; dsDNA enters through RuvA and exits via RuvB. An RuvB hexamer assembles on each DNA strand where it exits the tetramer. Each RuvB hexamer is contacted by two RuvA subunits (via domain III) on 2 adjacent RuvB subunits; this complex drives branch migration. In the full resolvosome a probable DNA-RuvA(4)-RuvB(12)-RuvC(2) complex forms which resolves the HJ.

It localises to the cytoplasm. Its function is as follows. The RuvA-RuvB-RuvC complex processes Holliday junction (HJ) DNA during genetic recombination and DNA repair, while the RuvA-RuvB complex plays an important role in the rescue of blocked DNA replication forks via replication fork reversal (RFR). RuvA specifically binds to HJ cruciform DNA, conferring on it an open structure. The RuvB hexamer acts as an ATP-dependent pump, pulling dsDNA into and through the RuvAB complex. HJ branch migration allows RuvC to scan DNA until it finds its consensus sequence, where it cleaves and resolves the cruciform DNA. The chain is Holliday junction branch migration complex subunit RuvA from Pectobacterium carotovorum subsp. carotovorum (strain PC1).